We begin with the raw amino-acid sequence, 152 residues long: Phosphopantetheine adenylyltransferase (152 aa).

Ser9 contacts substrate. ATP is bound by residues 9–10 (SF) and His17. The substrate site is built by Lys41, Thr73, and Arg87. ATP is bound by residues 88–90 (GLR), Glu98, and 122–128 (TSFISSS).

This sequence belongs to the bacterial CoaD family. Homohexamer. Mg(2+) serves as cofactor.

Its subcellular location is the cytoplasm. The catalysed reaction is (R)-4'-phosphopantetheine + ATP + H(+) = 3'-dephospho-CoA + diphosphate. It participates in cofactor biosynthesis; coenzyme A biosynthesis; CoA from (R)-pantothenate: step 4/5. In terms of biological role, reversibly transfers an adenylyl group from ATP to 4'-phosphopantetheine, yielding dephospho-CoA (dPCoA) and pyrophosphate. The polypeptide is Phosphopantetheine adenylyltransferase (Flavobacterium johnsoniae (strain ATCC 17061 / DSM 2064 / JCM 8514 / BCRC 14874 / CCUG 350202 / NBRC 14942 / NCIMB 11054 / UW101) (Cytophaga johnsonae)).